Reading from the N-terminus, the 369-residue chain is Probable serine/threonine-protein kinase FMP48 (369 aa).

Residues 2–369 (YTKLRSIQSG…EKPCLIQDGK (368 aa)) form the Protein kinase domain. ATP-binding positions include 8–16 (IQSGTFSTV) and Lys31. The active-site Proton acceptor is the Asp133.

It belongs to the protein kinase superfamily. Ser/Thr protein kinase family.

The protein localises to the mitochondrion. It catalyses the reaction L-seryl-[protein] + ATP = O-phospho-L-seryl-[protein] + ADP + H(+). The enzyme catalyses L-threonyl-[protein] + ATP = O-phospho-L-threonyl-[protein] + ADP + H(+). This is Probable serine/threonine-protein kinase FMP48 (FMP48) from Saccharomyces cerevisiae (strain ATCC 204508 / S288c) (Baker's yeast).